The primary structure comprises 343 residues: UDP-3-O-acylglucosamine N-acyltransferase 2 (343 aa).

The active-site Proton acceptor is His-251.

The protein belongs to the transferase hexapeptide repeat family. LpxD subfamily. In terms of assembly, homotrimer.

It catalyses the reaction a UDP-3-O-[(3R)-3-hydroxyacyl]-alpha-D-glucosamine + a (3R)-hydroxyacyl-[ACP] = a UDP-2-N,3-O-bis[(3R)-3-hydroxyacyl]-alpha-D-glucosamine + holo-[ACP] + H(+). The protein operates within bacterial outer membrane biogenesis; LPS lipid A biosynthesis. Catalyzes the N-acylation of UDP-3-O-acylglucosamine using 3-hydroxyacyl-ACP as the acyl donor. Is involved in the biosynthesis of lipid A, a phosphorylated glycolipid that anchors the lipopolysaccharide to the outer membrane of the cell. The polypeptide is UDP-3-O-acylglucosamine N-acyltransferase 2 (Legionella pneumophila subsp. pneumophila (strain Philadelphia 1 / ATCC 33152 / DSM 7513)).